Reading from the N-terminus, the 397-residue chain is Acetate kinase 1 (397 aa).

Asn8 serves as a coordination point for Mg(2+). Position 15 (Lys15) interacts with ATP. Arg89 contacts substrate. Asp146 (proton donor/acceptor) is an active-site residue. Residues 206–210 (HLGNG), 281–283 (DLR), and 329–333 (GIGEN) each bind ATP. Glu382 is a binding site for Mg(2+).

The protein belongs to the acetokinase family. In terms of assembly, homodimer. Mg(2+) is required as a cofactor. Mn(2+) serves as cofactor.

It is found in the cytoplasm. It catalyses the reaction acetate + ATP = acetyl phosphate + ADP. The protein operates within metabolic intermediate biosynthesis; acetyl-CoA biosynthesis; acetyl-CoA from acetate: step 1/2. Catalyzes the formation of acetyl phosphate from acetate and ATP. Can also catalyze the reverse reaction. This chain is Acetate kinase 1, found in Listeria monocytogenes serovar 1/2a (strain ATCC BAA-679 / EGD-e).